Reading from the N-terminus, the 78-residue chain is MKLTCMVIVAVLLLTACQLITADDSRGTQKHRSLRSTTKVSKATDCIEAGNYCGPTVMKICCGFCSPYSKICMNYPKN.

The first 22 residues, methionine 1–alanine 22, serve as a signal peptide directing secretion. A propeptide spanning residues aspartate 23–lysine 42 is cleaved from the precursor. 3 cysteine pairs are disulfide-bonded: cysteine 46–cysteine 62, cysteine 53–cysteine 65, and cysteine 61–cysteine 72.

The protein belongs to the conotoxin O1 superfamily. In terms of tissue distribution, expressed by the venom duct.

The protein localises to the secreted. Functionally, omega-conotoxins act at presynaptic membranes, they bind and block voltage-gated calcium channels (Cav). This chain is Omega-conotoxin-like SO-4 (SO4), found in Conus striatus (Striated cone).